A 440-amino-acid polypeptide reads, in one-letter code: Beta-1,3-galactosyl-O-glycosyl-glycoprotein beta-1,6-N-acetylglucosaminyltransferase 3 (440 aa).

Over 1–12 the chain is Cytoplasmic; sequence MKMTGWKKKLCR. Residues 13 to 30 form a helical; Signal-anchor for type II membrane protein membrane-spanning segment; it reads GHHLWALGCYSLLAVVAL. Over 31–440 the chain is Lumenal; the sequence is RLSLRLKCDV…RHKAIYGTEL (410 aa). Intrachain disulfides connect Cys-73/Cys-230, Cys-164/Cys-384, Cys-185/Cys-212, and Cys-393/Cys-425. Asn-108 carries N-linked (GlcNAc...) asparagine glycosylation.

The protein belongs to the glycosyltransferase 14 family. N-glycosylated.

Its subcellular location is the golgi apparatus membrane. It catalyses the reaction a 3-O-[beta-D-galactosyl-(1-&gt;3)-N-acetyl-alpha-D-galactosaminyl]-L-seryl-[protein] + UDP-N-acetyl-alpha-D-glucosamine = 3-O-{beta-D-galactosyl-(1-&gt;3)-[N-acetyl-beta-D-glucosaminyl-(1-&gt;6)]-N-acetyl-alpha-D-galactosaminyl}-L-seryl-[protein] + UDP + H(+). It carries out the reaction a 3-O-[beta-D-galactosyl-(1-&gt;3)-N-acetyl-alpha-D-galactosaminyl]-L-threonyl-[protein] + UDP-N-acetyl-alpha-D-glucosamine = a 3-O-{beta-D-galactosyl-(1-&gt;3)-[N-acetyl-beta-D-glucosaminyl-(1-&gt;6)]-N-acetyl-alpha-D-galactosaminyl}-L-threonyl-[protein] + UDP + H(+). The catalysed reaction is a beta-D-Gal-(1-&gt;4)-beta-D-GlcNAc-(1-&gt;3)-beta-D-Gal-(1-&gt;4)-beta-D-GlcNAc derivative + UDP-N-acetyl-alpha-D-glucosamine = a beta-D-Gal-(1-&gt;4)-beta-D-GlcNAc-(1-&gt;3)-[beta-D-GlcNAc-(1-&gt;6)]-beta-D-Gal-(1-&gt;4)-N-acetyl-beta-D-glucosaminyl derivative + UDP + H(+). The enzyme catalyses 3-O-[N-acetyl-beta-D-glucosaminyl-(1-&gt;3)-N-acetyl-alpha-D-galactosaminyl]-L-seryl-[protein] + UDP-N-acetyl-alpha-D-glucosamine = 3-O-[N-acetyl-beta-D-glucosaminyl-(1-&gt;3)-[N-acetyl-beta-D-glucosaminyl-(1-&gt;6)]-N-acetyl-alpha-D-galactosaminyl]-L-seryl-[protein] + UDP + H(+). It catalyses the reaction a 3-O-[N-acetyl-beta-D-glucosaminyl-(1-&gt;3)-N-acetyl-alpha-D-galactosaminyl]-L-threonyl-[protein] + UDP-N-acetyl-alpha-D-glucosamine = 3-O-[N-acetyl-beta-D-glucosaminyl-(1-&gt;3)-[N-acetyl-beta-D-glucosaminyl-(1-&gt;6)]-N-acetyl-alpha-D-galactosaminyl]-L-threonyl-[protein] + UDP + H(+). It participates in protein modification; protein glycosylation. Its function is as follows. Glycosyltransferase that can synthesize all known mucin beta 6 N-acetylglucosaminides. Mediates core 2 and core 4 O-glycan branching, 2 important steps in mucin-type biosynthesis. Also has I-branching enzyme activity by converting linear into branched poly-N-acetyllactosaminoglycans, leading to introduce the blood group I antigen during embryonic development. The polypeptide is Beta-1,3-galactosyl-O-glycosyl-glycoprotein beta-1,6-N-acetylglucosaminyltransferase 3 (GCNT3) (Bos mutus grunniens (Wild yak)).